The primary structure comprises 196 residues: ATP-dependent Clp protease proteolytic subunit (196 aa).

Catalysis depends on S96, which acts as the Nucleophile. H121 is an active-site residue.

It belongs to the peptidase S14 family. Fourteen ClpP subunits assemble into 2 heptameric rings which stack back to back to give a disk-like structure with a central cavity, resembling the structure of eukaryotic proteasomes.

It is found in the cytoplasm. The catalysed reaction is Hydrolysis of proteins to small peptides in the presence of ATP and magnesium. alpha-casein is the usual test substrate. In the absence of ATP, only oligopeptides shorter than five residues are hydrolyzed (such as succinyl-Leu-Tyr-|-NHMec, and Leu-Tyr-Leu-|-Tyr-Trp, in which cleavage of the -Tyr-|-Leu- and -Tyr-|-Trp bonds also occurs).. Cleaves peptides in various proteins in a process that requires ATP hydrolysis. Has a chymotrypsin-like activity. Plays a major role in the degradation of misfolded proteins. This Streptococcus pneumoniae (strain P1031) protein is ATP-dependent Clp protease proteolytic subunit.